The chain runs to 476 residues: Variant surface glycoprotein MITAT 1.2 (476 aa).

An N-terminal signal peptide occupies residues 1–26 (MPSNQEARLFLAVLVLAQVLPILVDS). Disulfide bonds link Cys41–Cys171 and Cys149–Cys213. N-linked (GlcNAc...) asparagine glycosylation occurs at Asn289. Disordered regions lie at residues 389-418 (QKHK…CKSP) and 435-459 (EEAK…TGSS). 2 disulfide bridges follow: Cys407-Cys419 and Cys415-Cys430. The segment covering 435-449 (EEAKKVADETAKDGK) has biased composition (basic and acidic residues). The segment covering 450–459 (TGNTNTTGSS) has biased composition (low complexity). N-linked (GlcNAc...) asparagine glycosylation is present at Asn454. A lipid anchor (GPI-anchor amidated serine) is attached at Ser459. Positions 460 to 476 (NSFVISKTPLWLAVLLF) are cleaved as a propeptide — removed in mature form.

In terms of assembly, homodimer.

The protein resides in the cell membrane. Functionally, VSG forms a coat on the surface of the parasite. The trypanosome evades the immune response of the host by expressing a series of antigenically distinct VSGs from an estimated 1000 VSG genes. In Trypanosoma brucei brucei, this protein is Variant surface glycoprotein MITAT 1.2.